A 362-amino-acid chain; its full sequence is Chorismate synthase (362 aa).

Residues R48 and R54 each coordinate NADP(+). FMN contacts are provided by residues 125-127, 241-242, G286, 301-305, and R327; these read RSS, NA, and KPTSS.

This sequence belongs to the chorismate synthase family. Homotetramer. Requires FMNH2 as cofactor.

It carries out the reaction 5-O-(1-carboxyvinyl)-3-phosphoshikimate = chorismate + phosphate. It participates in metabolic intermediate biosynthesis; chorismate biosynthesis; chorismate from D-erythrose 4-phosphate and phosphoenolpyruvate: step 7/7. Its function is as follows. Catalyzes the anti-1,4-elimination of the C-3 phosphate and the C-6 proR hydrogen from 5-enolpyruvylshikimate-3-phosphate (EPSP) to yield chorismate, which is the branch point compound that serves as the starting substrate for the three terminal pathways of aromatic amino acid biosynthesis. This reaction introduces a second double bond into the aromatic ring system. The sequence is that of Chorismate synthase from Paramagnetospirillum magneticum (strain ATCC 700264 / AMB-1) (Magnetospirillum magneticum).